Reading from the N-terminus, the 334-residue chain is Tryptophan--tRNA ligase (334 aa).

ATP is bound by residues 11–13 and 19–20; these read QPS and GN. Positions 12–20 match the 'HIGH' region motif; the sequence is PSGELTIGN. Residue D135 coordinates L-tryptophan. ATP-binding positions include 147-149, V186, and 195-199; these read GED and KMSKS. Positions 195–199 match the 'KMSKS' region motif; it reads KMSKS.

It belongs to the class-I aminoacyl-tRNA synthetase family. In terms of assembly, homodimer.

The protein resides in the cytoplasm. The enzyme catalyses tRNA(Trp) + L-tryptophan + ATP = L-tryptophyl-tRNA(Trp) + AMP + diphosphate + H(+). In terms of biological role, catalyzes the attachment of tryptophan to tRNA(Trp). The chain is Tryptophan--tRNA ligase from Klebsiella aerogenes (Enterobacter aerogenes).